Reading from the N-terminus, the 359-residue chain is Phospho-N-acetylmuramoyl-pentapeptide-transferase (359 aa).

The next 10 membrane-spanning stretches (helical) occupy residues 26-46, 73-93, 98-118, 134-154, 166-186, 197-217, 234-254, 261-281, 286-306, and 338-358; these read TIYGGLTAFLICFLLGPWVIN, TMGGILILFSLGVSTLLWADL, ILITLLSMLLFGAIGFIDDYL, FLVQIMAGLVISYLVYLCPDF, FTPDLGIWYIPFATLVIVGTS, GLAIGPIIIAGVTYMIFAYVA, CGEITIVCGILAGAGLGFLWF, VFMGDTGSIPLGAILGTIAVI, ILLLVVGGLFVIEALSVIIQV, and IVRFWIIAITLALISLSTLKI.

This sequence belongs to the glycosyltransferase 4 family. MraY subfamily. Mg(2+) serves as cofactor.

It localises to the cell inner membrane. The catalysed reaction is UDP-N-acetyl-alpha-D-muramoyl-L-alanyl-gamma-D-glutamyl-meso-2,6-diaminopimeloyl-D-alanyl-D-alanine + di-trans,octa-cis-undecaprenyl phosphate = di-trans,octa-cis-undecaprenyl diphospho-N-acetyl-alpha-D-muramoyl-L-alanyl-D-glutamyl-meso-2,6-diaminopimeloyl-D-alanyl-D-alanine + UMP. Its pathway is cell wall biogenesis; peptidoglycan biosynthesis. Catalyzes the initial step of the lipid cycle reactions in the biosynthesis of the cell wall peptidoglycan: transfers peptidoglycan precursor phospho-MurNAc-pentapeptide from UDP-MurNAc-pentapeptide onto the lipid carrier undecaprenyl phosphate, yielding undecaprenyl-pyrophosphoryl-MurNAc-pentapeptide, known as lipid I. The polypeptide is Phospho-N-acetylmuramoyl-pentapeptide-transferase (Desulforapulum autotrophicum (strain ATCC 43914 / DSM 3382 / VKM B-1955 / HRM2) (Desulfobacterium autotrophicum)).